Reading from the N-terminus, the 1368-residue chain is DNA-directed RNA polymerase subunit beta (1368 aa).

Belongs to the RNA polymerase beta chain family. In terms of assembly, the RNAP catalytic core consists of 2 alpha, 1 beta, 1 beta' and 1 omega subunit. When a sigma factor is associated with the core the holoenzyme is formed, which can initiate transcription.

The catalysed reaction is RNA(n) + a ribonucleoside 5'-triphosphate = RNA(n+1) + diphosphate. Functionally, DNA-dependent RNA polymerase catalyzes the transcription of DNA into RNA using the four ribonucleoside triphosphates as substrates. The polypeptide is DNA-directed RNA polymerase subunit beta (Desulfosudis oleivorans (strain DSM 6200 / JCM 39069 / Hxd3) (Desulfococcus oleovorans)).